The chain runs to 374 residues: Probable dual-specificity RNA methyltransferase RlmN (374 aa).

Residues 1-17 (MEKNEISEERRTQEKEK) are compositionally biased toward basic and acidic residues. The interval 1–22 (MEKNEISEERRTQEKEKQHGHR) is disordered. The active-site Proton acceptor is the Glu-119. Residues 125–360 (SEERITACIS…VTVRKSQGAT (236 aa)) form the Radical SAM core domain. Cysteines 132 and 365 form a disulfide. [4Fe-4S] cluster is bound by residues Cys-139, Cys-143, and Cys-146. S-adenosyl-L-methionine is bound by residues 190–191 (GE), Ser-223, 246–248 (SLH), and Asn-322. Catalysis depends on Cys-365, which acts as the S-methylcysteine intermediate.

It belongs to the radical SAM superfamily. RlmN family. The cofactor is [4Fe-4S] cluster.

The protein resides in the cytoplasm. It catalyses the reaction adenosine(2503) in 23S rRNA + 2 reduced [2Fe-2S]-[ferredoxin] + 2 S-adenosyl-L-methionine = 2-methyladenosine(2503) in 23S rRNA + 5'-deoxyadenosine + L-methionine + 2 oxidized [2Fe-2S]-[ferredoxin] + S-adenosyl-L-homocysteine. The enzyme catalyses adenosine(37) in tRNA + 2 reduced [2Fe-2S]-[ferredoxin] + 2 S-adenosyl-L-methionine = 2-methyladenosine(37) in tRNA + 5'-deoxyadenosine + L-methionine + 2 oxidized [2Fe-2S]-[ferredoxin] + S-adenosyl-L-homocysteine. Its function is as follows. Specifically methylates position 2 of adenine 2503 in 23S rRNA and position 2 of adenine 37 in tRNAs. The sequence is that of Probable dual-specificity RNA methyltransferase RlmN from Chlorobaculum tepidum (strain ATCC 49652 / DSM 12025 / NBRC 103806 / TLS) (Chlorobium tepidum).